The chain runs to 47 residues: Packaging protein P22 (47 aa).

A helical membrane pass occupies residues 22–42 (TGWLAFVGLIIVAIILWQQII).

As to quaternary structure, heterodimer of P20 and P22; further multimerizes as hexamers of heterodimers. Part of the dodecameric portal complex that is composed of the packaging efficiency factor P6, the DNA packaging ATPase P9, and the internal heterododecamer P20/P22 which spans the virion inner membrane.

The protein localises to the virion membrane. Functionally, together with P22, forms the internal part of the portal complex embeded in the virion internal membrane and which plays critical roles in genome packaging and genome ejection. Both proteins multimerize as a single ring-shaped heterdodecamer arranged around a central channel and interact with the P6/P9 external part of the portal. The chain is Packaging protein P22 (XXII) from Enterobacteria phage PRD1 (Bacteriophage PRD1).